The chain runs to 271 residues: Phosphatidylglycerol--prolipoprotein diacylglyceryl transferase (271 aa).

The next 7 membrane-spanning stretches (helical) occupy residues 21–41 (ISVRWYGLMYLFGFLFAMWLA), 60–80 (LLFAGFLGVVLGGRIGYVLFY), 95–115 (VWTGGMSFHGGLLGVITAMLW), 124–144 (FFGVADFVAPLVPFGLGVGRL), 176–196 (SQLYEMALEGVLLFFILNWFI), 203–223 (GSVSGLFLAGYGTFRFLVEYV), and 230–250 (LGLFGGFISMGQILSSPMIIG). Arginine 143 lines the a 1,2-diacyl-sn-glycero-3-phospho-(1'-sn-glycerol) pocket.

This sequence belongs to the Lgt family.

Its subcellular location is the cell inner membrane. The catalysed reaction is L-cysteinyl-[prolipoprotein] + a 1,2-diacyl-sn-glycero-3-phospho-(1'-sn-glycerol) = an S-1,2-diacyl-sn-glyceryl-L-cysteinyl-[prolipoprotein] + sn-glycerol 1-phosphate + H(+). It functions in the pathway protein modification; lipoprotein biosynthesis (diacylglyceryl transfer). Its function is as follows. Catalyzes the transfer of the diacylglyceryl group from phosphatidylglycerol to the sulfhydryl group of the N-terminal cysteine of a prolipoprotein, the first step in the formation of mature lipoproteins. This Vibrio vulnificus (strain YJ016) protein is Phosphatidylglycerol--prolipoprotein diacylglyceryl transferase.